The sequence spans 409 residues: bZIP transcription factor 16 (409 aa).

The segment covering 1-16 (MASNEMEKSSKEKEPK) has biased composition (basic and acidic residues). 4 disordered regions span residues 1-63 (MASN…VASS), 118-236 (NGMT…LPVS), 274-327 (MHGK…LRKQ), and 362-409 (TTEN…KDST). Over residues 24–34 (APPSSQEPSSA) the composition is skewed to low complexity. Over residues 133-145 (GDAKQSEVKEKLP) the composition is skewed to basic and acidic residues. Polar residues predominate over residues 152-178 (SLGSLNMITGKNNEPGKNSGASANGAY). A compositionally biased stretch (low complexity) spans 179–203 (SKSGESASDGSSEGSDGNSQNDSGS). Positions 216 to 228 (NGGSANGPQNGSA) are enriched in polar residues. One can recognise a bZIP domain in the interval 305–368 (ELKRQRRKQS…EELTTENTSL (64 aa)). Positions 307–323 (KRQRRKQSNRESARRSR) match the Bipartite nuclear localization signal motif. Positions 307-326 (KRQRRKQSNRESARRSRLRK) are basic motif. Positions 314–327 (SNRESARRSRLRKQ) are enriched in basic and acidic residues. The tract at residues 333-368 (LAQRAEVLNEENTNLRAEINKLKSQCEELTTENTSL) is leucine-zipper. Residues 398-409 (AERKVDSYKDST) show a composition bias toward basic and acidic residues.

Belongs to the bZIP family. As to quaternary structure, monomer, homodimer and heterodimers with BZIP68 and GBF1/BZIP41. Heterodimers with GBF2/BZIP54 and GBF3/BZIP55. Binds DNA as monomer and forms homo- and heterodimers. The monomeric form is redox regulated. Interacts with GIP1.

Its subcellular location is the nucleus. Transcriptional activator that binds to the G-box motif (5'-CACGTG-3') and other cis-acting elements with 5'-ACGT-3' core, such as Hex, C-box and as-1 motifs. Possesses high binding affinity to G-box, much lower affinity to Hex and C-box, and little affinity to as-1 element. G-box and G-box-like motifs are cis-acting elements defined in promoters of certain plant genes which are regulated by such diverse stimuli as light-induction or hormone control. Binds to the G-box motif 5'-CACGTG-3' of LHCB2.4 (At3g27690) promoter. May act as transcriptional repressor in light-regulated expression of LHCB2.4. Binds DNA as monomer. DNA-binding activity is redox-dependent. This Arabidopsis thaliana (Mouse-ear cress) protein is bZIP transcription factor 16.